Here is a 586-residue protein sequence, read N- to C-terminus: Lamin-B1 (586 aa).

A disordered region spans residues 1–31 (MATATPVPPRMGSRAGGPTTPLSPTRLSRLQ). Alanine 2 is modified (N-acetylalanine). A head region spans residues 2–34 (ATATPVPPRMGSRAGGPTTPLSPTRLSRLQEKE). Residues threonine 3 and threonine 5 each carry the phosphothreonine modification. The residue at position 14 (arginine 14) is an Omega-N-methylarginine. The residue at position 20 (threonine 20) is a Phosphothreonine. Phosphoserine is present on serine 23. The residue at position 25 (threonine 25) is a Phosphothreonine. Serine 28 is subject to Phosphoserine. The IF rod domain occupies 32–388 (EKEELRELND…KLLEGEEERL (357 aa)). Residues 35–69 (ELRELNDRLAVYIDKVRSLETENSALQLQVTEREE) form a coil 1A region. Residues 70–81 (VRGRELTGLKAL) form a linker 1 region. Residues 82 to 215 (YETELADARR…EFRKSMYEEE (134 aa)) form a coil 1B region. Lysine 102 is covalently cross-linked (Glycyl lysine isopeptide (Lys-Gly) (interchain with G-Cter in SUMO2)). N6-acetyllysine is present on lysine 111. Lysine 123 is covalently cross-linked (Glycyl lysine isopeptide (Lys-Gly) (interchain with G-Cter in SUMO2)). Serine 126 carries the phosphoserine modification. Lysine 145 participates in a covalent cross-link: Glycyl lysine isopeptide (Lys-Gly) (interchain with G-Cter in SUMO2). The residue at position 157 (lysine 157) is an N6-acetyllysine; alternate. A Glycyl lysine isopeptide (Lys-Gly) (interchain with G-Cter in SUMO2); alternate cross-link involves residue lysine 157. Serine 158 is modified (phosphoserine). Lysine 181 is covalently cross-linked (Glycyl lysine isopeptide (Lys-Gly) (interchain with G-Cter in SUMO2)). Residues serine 200, serine 210, and serine 232 each carry the phosphoserine modification. The segment at 216–243 (INETRRKHETRLVEVDSGRQIEYEYKLA) is linker 2. Glycyl lysine isopeptide (Lys-Gly) (interchain with G-Cter in SUMO2) cross-links involve residues lysine 241 and lysine 261. Residues 244 to 386 (QALHEMREQH…YRKLLEGEEE (143 aa)) are coil 2. The residue at position 271 (lysine 271) is an N6-acetyllysine; alternate. Lysine 271 participates in a covalent cross-link: Glycyl lysine isopeptide (Lys-Gly) (interchain with G-Cter in SUMO2); alternate. A phosphoserine mark is found at serine 278 and serine 302. Lysine 312 participates in a covalent cross-link: Glycyl lysine isopeptide (Lys-Gly) (interchain with G-Cter in SUMO2). An N6-acetyllysine; alternate modification is found at lysine 330. Lysine 330 is covalently cross-linked (Glycyl lysine isopeptide (Lys-Gly) (interchain with G-Cter in SUMO2); alternate). Phosphoserine is present on residues serine 375 and serine 393. The tail stretch occupies residues 387 to 586 (RLKLSPSPSS…RASNRSCAIM (200 aa)). The tract at residues 388–432 (LKLSPSPSSRVTVSRASSSRSVRTTRGKRKRVDVEESEASSSVSI) is disordered. Residues 390 to 409 (LSPSPSSRVTVSRASSSRSV) are compositionally biased toward low complexity. O-linked (GlcNAc) threonine glycosylation occurs at threonine 399. Omega-N-methylarginine is present on arginine 413. The short motif at 415–420 (KRKRVD) is the Nuclear localization signal element. Positions 430-546 (VSISHSASAT…EEVAQRSTVF (117 aa)) constitute an LTD domain. Lysine 483 carries the post-translational modification N6-acetyllysine. Residue lysine 532 forms a Glycyl lysine isopeptide (Lys-Gly) (interchain with G-Cter in SUMO2) linkage. Serine 534 carries the post-translational modification Phosphoserine. Residue lysine 547 forms a Glycyl lysine isopeptide (Lys-Gly) (interchain with G-Cter in SUMO2) linkage. A Phosphothreonine modification is found at threonine 575. Position 583 is a cysteine methyl ester (cysteine 583). A lipid anchor (S-farnesyl cysteine) is attached at cysteine 583. A propeptide spans 584–586 (AIM) (removed in mature form).

This sequence belongs to the intermediate filament family. Homodimer. Lamin dimers then assemble into dimeric head-to-tail polymers. Ultimately, two head-to-tail polymers assemble laterally into a protofilament with a uniformly shaped rod of 3.5 nm in diameter. Interacts with SPAG4 and SEPT12. B-type lamins undergo a series of modifications, such as farnesylation and phosphorylation. Increased phosphorylation of the lamins occurs before envelope disintegration and probably plays a role in regulating lamin associations. In terms of processing, phosphorylation plays a key role in lamin organization, subcellular localization and nuclear envelope disintegration. Phosphorylation by CDK1 at Ser-23 and Ser-393 at the onset of mitosis drives lamin disassembly and nuclear envelope breakdown.

Its subcellular location is the nucleus lamina. Lamins are intermediate filament proteins that assemble into a filamentous meshwork, and which constitute the major components of the nuclear lamina, a fibrous layer on the nucleoplasmic side of the inner nuclear membrane. Lamins provide a framework for the nuclear envelope, bridging the nuclear envelope and chromatin, thereby playing an important role in nuclear assembly, chromatin organization, nuclear membrane and telomere dynamics. The structural integrity of the lamina is strictly controlled by the cell cycle, as seen by the disintegration and formation of the nuclear envelope in prophase and telophase, respectively. The polypeptide is Lamin-B1 (LMNB1) (Homo sapiens (Human)).